The chain runs to 424 residues: Enolase (424 aa).

Glutamine 162 provides a ligand contact to (2R)-2-phosphoglycerate. Glutamate 204 acts as the Proton donor in catalysis. Mg(2+) is bound by residues aspartate 241, glutamate 284, and aspartate 311. Residues lysine 336, arginine 365, serine 366, and lysine 387 each coordinate (2R)-2-phosphoglycerate. Lysine 336 functions as the Proton acceptor in the catalytic mechanism.

Belongs to the enolase family. The cofactor is Mg(2+).

Its subcellular location is the cytoplasm. It localises to the secreted. The protein localises to the cell surface. The catalysed reaction is (2R)-2-phosphoglycerate = phosphoenolpyruvate + H2O. Its pathway is carbohydrate degradation; glycolysis; pyruvate from D-glyceraldehyde 3-phosphate: step 4/5. Functionally, catalyzes the reversible conversion of 2-phosphoglycerate (2-PG) into phosphoenolpyruvate (PEP). It is essential for the degradation of carbohydrates via glycolysis. This chain is Enolase, found in Rhizobium leguminosarum bv. trifolii (strain WSM2304).